The primary structure comprises 366 residues: Melatonin receptor type 1A (366 aa).

Residues 1–45 (MAGRLWGSPGGTPKGNGSSALLNVSQAAPGAGDGVRPRPSWLAAT) are Extracellular-facing. N-linked (GlcNAc...) asparagine glycosylation is found at asparagine 16 and asparagine 23. A helical membrane pass occupies residues 46-66 (LASILIFTIVVDIVGNLLVVL). Residues 67 to 79 (SVYRNKKLRNAGN) lie on the Cytoplasmic side of the membrane. Residues 80–100 (VFVVSLAVADLLVAVYPYPLA) traverse the membrane as a helical segment. The Extracellular segment spans residues 101 to 118 (LASIVNNGWSLSSLHCQL). A disulfide bond links cysteine 116 and cysteine 193. A helical membrane pass occupies residues 119 to 139 (SGFLMGLSVIGSVFSITGIAI). The Cytoplasmic portion of the chain corresponds to 140–158 (NRYCCICHSLRYGKLYSGT). Residues 159–179 (NSLCYVFLIWTLTLVAIVPNL) form a helical membrane-spanning segment. The Extracellular portion of the chain corresponds to 180–203 (CVGTLQYDPRIYSCTFTQSVSSAY). The chain crosses the membrane as a helical span at residues 204-224 (TIAVVVFHFIVPMLVVVFCYL). The Cytoplasmic segment spans residues 225 to 256 (RIWALVLQVRWKVKPDNKPKLKPQDFRNFVTM). The chain crosses the membrane as a helical span at residues 257-277 (FVVFVLFAICWAPLNFIGLVV). Residues 278 to 290 (ASDPASMAPRIPE) are Extracellular-facing. A helical transmembrane segment spans residues 291 to 311 (WLFVASYYMAYFNSCLNAIIY). Residues 312–366 (GLLNQNFRQEYRKIIVSLCTTKMFFVDSSNHVADRIKRKPSPLIANHNLIKVDSV) lie on the Cytoplasmic side of the membrane.

It belongs to the G-protein coupled receptor 1 family.

The protein resides in the cell membrane. In terms of biological role, high affinity receptor for melatonin. Likely to mediate the reproductive and circadian actions of melatonin. The activity of this receptor is mediated by pertussis toxin sensitive G proteins that inhibit adenylate cyclase activity. Possibly involved in sleep induction, by melatonin activation of the potassium channel KCNMA1/BK and the dissociation of G-beta and G-gamma subunits, thereby decreasing synaptic transmission. This Ovis aries (Sheep) protein is Melatonin receptor type 1A (MTNR1A).